Here is a 128-residue protein sequence, read N- to C-terminus: Probable 4-amino-4-deoxy-L-arabinose-phosphoundecaprenol flippase subunit ArnF (128 aa).

Topologically, residues 1 to 2 (MG) are cytoplasmic. Residues 3–23 (LIWGLFSVIIASVAQLSLGFA) form a helical membrane-spanning segment. The Periplasmic portion of the chain corresponds to 24–35 (ASHLPPMTHLWD). A helical transmembrane segment spans residues 36 to 56 (FIAALLAFGLDARILLLGLLG). Topologically, residues 57–76 (YLLSVFCWYKTLHKLALSKA) are cytoplasmic. A helical transmembrane segment spans residues 77-97 (YALLSMSYVLVWIASMVLPGW). Over 98–100 (EGT) the chain is Periplasmic. Residues 101-121 (FSLKALLGVACIMSGLMLIFL) form a helical membrane-spanning segment. At 122-128 (PMTKQRY) the chain is on the cytoplasmic side.

The protein belongs to the ArnF family. In terms of assembly, heterodimer of ArnE and ArnF.

The protein localises to the cell inner membrane. The protein operates within bacterial outer membrane biogenesis; lipopolysaccharide biosynthesis. Translocates 4-amino-4-deoxy-L-arabinose-phosphoundecaprenol (alpha-L-Ara4N-phosphoundecaprenol) from the cytoplasmic to the periplasmic side of the inner membrane. This chain is Probable 4-amino-4-deoxy-L-arabinose-phosphoundecaprenol flippase subunit ArnF, found in Escherichia coli O9:H4 (strain HS).